Here is a 156-residue protein sequence, read N- to C-terminus: ATP synthase subunit b (156 aa).

A helical membrane pass occupies residues 7–29 (LLGQAISFALFVWFCMKYVWPPL).

The protein belongs to the ATPase B chain family. In terms of assembly, F-type ATPases have 2 components, F(1) - the catalytic core - and F(0) - the membrane proton channel. F(1) has five subunits: alpha(3), beta(3), gamma(1), delta(1), epsilon(1). F(0) has three main subunits: a(1), b(2) and c(10-14). The alpha and beta chains form an alternating ring which encloses part of the gamma chain. F(1) is attached to F(0) by a central stalk formed by the gamma and epsilon chains, while a peripheral stalk is formed by the delta and b chains.

It is found in the cell inner membrane. Functionally, f(1)F(0) ATP synthase produces ATP from ADP in the presence of a proton or sodium gradient. F-type ATPases consist of two structural domains, F(1) containing the extramembraneous catalytic core and F(0) containing the membrane proton channel, linked together by a central stalk and a peripheral stalk. During catalysis, ATP synthesis in the catalytic domain of F(1) is coupled via a rotary mechanism of the central stalk subunits to proton translocation. Its function is as follows. Component of the F(0) channel, it forms part of the peripheral stalk, linking F(1) to F(0). This chain is ATP synthase subunit b, found in Vibrio parahaemolyticus serotype O3:K6 (strain RIMD 2210633).